We begin with the raw amino-acid sequence, 232 residues long: Protein INAPERTURATE POLLEN 1 homolog (232 aa).

In terms of assembly, interacts with LECRKS7/DAF1.

Its subcellular location is the cytoplasm. Its function is as follows. Required for pollen aperture formation, male fertility and LECRKS7/DAF1 function. Seems to be involved in operculum protrusion. Participates in the modification of plasma membrane at future aperture sites, possibly by creating close contact between the plasma membrane and callose wall to prevent primexine formation and sporopollenin deposition. This Oryza sativa subsp. japonica (Rice) protein is Protein INAPERTURATE POLLEN 1 homolog.